Consider the following 310-residue polypeptide: Formyltetrahydrofolate deformylase (310 aa).

A disordered region spans residues Met1–Ile30. Positions Pro15–Ala28 are enriched in pro residues. Positions Arg32 to Arg108 constitute an ACT domain. The active site involves Asp255.

This sequence belongs to the PurU family.

It catalyses the reaction (6R)-10-formyltetrahydrofolate + H2O = (6S)-5,6,7,8-tetrahydrofolate + formate + H(+). It participates in purine metabolism; IMP biosynthesis via de novo pathway; formate from 10-formyl-5,6,7,8-tetrahydrofolate: step 1/1. Its function is as follows. Catalyzes the hydrolysis of 10-formyltetrahydrofolate (formyl-FH4) to formate and tetrahydrofolate (FH4). The chain is Formyltetrahydrofolate deformylase from Mycobacterium bovis (strain ATCC BAA-935 / AF2122/97).